We begin with the raw amino-acid sequence, 101 residues long: Protein S100-A4 (101 aa).

Alanine 2 carries the N-acetylalanine modification. 2 EF-hand domains span residues 12–47 and 50–85; these read IVSTFHKYSGKEGDKFKLNKTELKELLTRELPSFLG and TDEAAFQKVMSNLDSNRDNEVDFQEYCVFLSCIAMM. The Ca(2+) site is built by lysine 28 and glutamate 33. Lysine 35 is modified (N6-acetyllysine). Ca(2+) contacts are provided by aspartate 63, asparagine 65, aspartate 67, glutamate 69, and glutamate 74.

It belongs to the S-100 family. In terms of assembly, homodimer. Interacts with PPFIBP1 in a calcium-dependent mode. Interacts with PGLYRP1; this complex acts as a chemoattractant that promotes lymphocyte movement. Interacts with MYH9; this interaction increases cell motility. Interacts with Annexin 2/ANXA2. Interacts with TP53; this interaction promotes TP53 degradation. Interacts with CCR5 and CXCR3. Interacts with FCGR3A; this interaction inhibits PKC-dependent phosphorylation of FCGR3A. In terms of tissue distribution, specifically expressed in different metastatic cells.

The protein localises to the secreted. It is found in the nucleus. The protein resides in the cytoplasm. Calcium-binding protein that plays a role in various cellular processes including motility, angiogenesis, cell differentiation, apoptosis, and autophagy. Increases cell motility and invasiveness by interacting with non-muscle myosin heavy chain (NMMHC) IIA/MYH9. Mechanistically, promotes filament depolymerization and increases the amount of soluble myosin-IIA, resulting in the formation of stable protrusions facilitating chemotaxis. Also modulates the pro-apoptotic function of TP53 by binding to its C-terminal transactivation domain within the nucleus and reducing its protein levels. Within the extracellular space, stimulates cytokine production including granulocyte colony-stimulating factor and CCL24 from T-lymphocytes. In addition, stimulates T-lymphocyte chemotaxis by acting as a chemoattractant complex with PGLYRP1 that promotes lymphocyte migration via CCR5 and CXCR3 receptors. The protein is Protein S100-A4 (S100a4) of Mus musculus (Mouse).